Here is a 441-residue protein sequence, read N- to C-terminus: MRLSRYFLPILRETPKEAEIVSHRLMLRAGMIRQEAAGIYAWLPLGLRVLNKVCDVVRAEQDRAGAIEILMPTIQAADLWRESGRYEAYGKEMLRLKDRHERELLYGPTAEEVVTEIFRASTRSYKDLPKNLYQISWKFRDEVRPRFGTMRSREFLMKDGYSFDIDQAAARHSYNKVFVSYLRTFERLGLRAIPMRADTGPIGGDLSHEFIILAKTGESEVFCDQAYLDMPVPPPSVDFDDVAGLQGVVDAWTSHYAATDEMHDEAVFAEVPEASRLSARGIEVGHIFYFGTKYSTPMKAVVTGPDGSERPVHMGSYGIGPSRLVAATIEASHDEAGIIWPDAIAPFDVALINLKVGDGACDTACAEIQAALETAGLSVLYDDRDERPGAKFATADLIGLPWQVIVGPKGLAEGKIELKRRASGERETLDPVDLPARIRRL.

Belongs to the class-II aminoacyl-tRNA synthetase family. ProS type 2 subfamily. As to quaternary structure, homodimer.

It is found in the cytoplasm. It carries out the reaction tRNA(Pro) + L-proline + ATP = L-prolyl-tRNA(Pro) + AMP + diphosphate. Its function is as follows. Catalyzes the attachment of proline to tRNA(Pro) in a two-step reaction: proline is first activated by ATP to form Pro-AMP and then transferred to the acceptor end of tRNA(Pro). The sequence is that of Proline--tRNA ligase from Methylorubrum extorquens (strain PA1) (Methylobacterium extorquens).